Reading from the N-terminus, the 136-residue chain is Class I hydrophobin 16 (136 aa).

An N-terminal signal peptide occupies residues 1 to 19 (MKFTSVIALVATAATLVGA). Disulfide bonds link C58/C115, C65/C109, C66/C99, and C116/C129. An N-linked (GlcNAc...) asparagine glycan is attached at N74.

The protein belongs to the fungal hydrophobin family. As to quaternary structure, self-assembles to form functional amyloid fibrils called rodlets. Self-assembly into fibrillar rodlets occurs spontaneously at hydrophobic:hydrophilic interfaces and the rodlets further associate laterally to form amphipathic monolayers.

Its subcellular location is the secreted. The protein resides in the cell wall. In terms of biological role, aerial growth, conidiation, and dispersal of filamentous fungi in the environment rely upon a capability of their secreting small amphipathic proteins called hydrophobins (HPBs) with low sequence identity. Class I can self-assemble into an outermost layer of rodlet bundles on aerial cell surfaces, conferring cellular hydrophobicity that supports fungal growth, development and dispersal; whereas Class II form highly ordered films at water-air interfaces through intermolecular interactions but contribute nothing to the rodlet structure. Hydph16 is a class I hydrophobin that has specific functions in aerial mycelium formation, cell wall stress protection, and cell wall structure formation, but does not seem to be involved in mycelial hydrophobicity. Specifically functions in resisting cell wall synthesis inhibitors. The polypeptide is Class I hydrophobin 16 (Pleurotus ostreatus (strain PC15) (Oyster mushroom)).